The following is a 332-amino-acid chain: Homoarginine-6-hydroxylase 2-ODD-C23.1 (332 aa).

The Fe2OG dioxygenase domain occupies 182 to 287 (PFWVMRLIGY…RVCVAFFYET (106 aa)). Fe cation contacts are provided by histidine 210, aspartate 212, and histidine 268. Residue arginine 278 coordinates 2-oxoglutarate.

It belongs to the iron/ascorbate-dependent oxidoreductase family. Fe(2+) serves as cofactor.

The protein resides in the cytoplasm. The protein localises to the cytosol. It carries out the reaction L-homoarginine + 2-oxoglutarate + O2 = 6-hydroxy-L-homoarginine + succinate + CO2. Slightly inhibited by canavanine (Can), the 5-oxa-analog of arginine. Functionally, 2-oxoglutarate-dependent dioxygenase catalyzing homoarginine 6-hydroxylation thus producing 6-hydroxy-L-homoarginine. Guanidine (Gd) is in turn synthesized by the spontaneous conversion of 6-hydroxy-L-homoarginine to (S)-2-amino-6-oxohexanoate (RHEA:79843); guanidine is a nitrogen-rich compound that can serve as a defense or signaling substance. The sequence is that of Homoarginine-6-hydroxylase 2-ODD-C23.1 from Arabidopsis thaliana (Mouse-ear cress).